The following is a 137-amino-acid chain: Putative pre-16S rRNA nuclease (137 aa).

Belongs to the YqgF nuclease family.

It localises to the cytoplasm. Functionally, could be a nuclease involved in processing of the 5'-end of pre-16S rRNA. The polypeptide is Putative pre-16S rRNA nuclease (Bacillus cereus (strain 03BB102)).